The following is a 391-amino-acid chain: Na(+)/H(+) antiporter NhaA (391 aa).

11 consecutive transmembrane segments (helical) span residues 14 to 34 (AGGI…NSPL), 59 to 79 (LIHW…GLEV), 95 to 115 (SLPT…YLIF), 124 to 144 (VGWA…MALL), 154 to 174 (VFLL…IALF), 177 to 197 (TDLS…LIGL), 213 to 233 (LILW…GVII), 261 to 281 (FIIL…GMSL), 292 to 312 (IALG…YIAV), 331 to 351 (VAVM…LAFV), and 363 to 383 (LGIL…LSKV).

Belongs to the NhaA Na(+)/H(+) (TC 2.A.33) antiporter family.

Its subcellular location is the cell inner membrane. The enzyme catalyses Na(+)(in) + 2 H(+)(out) = Na(+)(out) + 2 H(+)(in). Its function is as follows. Na(+)/H(+) antiporter that extrudes sodium in exchange for external protons. The polypeptide is Na(+)/H(+) antiporter NhaA (Shewanella pealeana (strain ATCC 700345 / ANG-SQ1)).